The chain runs to 60 residues: Mastoparan-D (60 aa).

Positions 1-27 are cleaved as a signal peptide; that stretch reads MKNTILILFTAFIALLGFFGMSAEALA. AXPX repeat units lie at residues 27 to 30, 31 to 34, 35 to 38, and 41 to 44; these read ADPI, ADPV, AGPN, and ADPE. Residues 28–45 constitute a propeptide that is removed on maturation; sequence DPIADPVAGPNPEADPEA. Leu59 is subject to Leucine amide.

Belongs to the MCD family. Mastoparan subfamily. Expressed by the venom gland.

The protein resides in the secreted. It localises to the target cell membrane. Functionally, antimicrobial and mast cell degranulating peptide. Has broad spectrum antibacterial activity against both Gram-positive and Gram-negative bacteria (S.aureus MIC=24-32 ug/ml, S.xylosus MIC=2 ug/ml, S.alactolyticus MIC=16 ug/ml, C.koseri MIC=4 ug/ml, E.coli MIC=8 ug/ml, K.pneumoniae MIC=32 ug/ml, P.aerugiosa MIC=128 ug/ml, S.choleraesuis MIC=16 ug/ml, S.typhimurium MIC=32 ug/ml, V.parahamelytics MIC=32 ug/ml). Affects membrane permeability of E.coli. Shows hemolytic activities on sheep, chicken and human erythrocytes. Its mast cell degranulation activity may be related to the activation of G-protein coupled receptors in mast cells as well as interaction with other proteins located in cell endosomal membranes in the mast cells. The sequence is that of Mastoparan-D from Vespa ducalis (Black-tailed hornet).